The primary structure comprises 279 residues: Malonyl-[acyl-carrier protein] O-methyltransferase (279 aa).

This sequence belongs to the methyltransferase superfamily.

The catalysed reaction is malonyl-[ACP] + S-adenosyl-L-methionine = malonyl-[ACP] methyl ester + S-adenosyl-L-homocysteine. It participates in cofactor biosynthesis; biotin biosynthesis. Its function is as follows. Converts the free carboxyl group of a malonyl-thioester to its methyl ester by transfer of a methyl group from S-adenosyl-L-methionine (SAM). It allows to synthesize pimeloyl-ACP via the fatty acid synthetic pathway. The protein is Malonyl-[acyl-carrier protein] O-methyltransferase of Hahella chejuensis (strain KCTC 2396).